A 270-amino-acid chain; its full sequence is Putative pyruvate, phosphate dikinase regulatory protein 2 (270 aa).

151 to 158 is an ADP binding site; it reads GVSRTSKT.

Belongs to the pyruvate, phosphate/water dikinase regulatory protein family. PDRP subfamily.

It carries out the reaction N(tele)-phospho-L-histidyl/L-threonyl-[pyruvate, phosphate dikinase] + ADP = N(tele)-phospho-L-histidyl/O-phospho-L-threonyl-[pyruvate, phosphate dikinase] + AMP + H(+). It catalyses the reaction N(tele)-phospho-L-histidyl/O-phospho-L-threonyl-[pyruvate, phosphate dikinase] + phosphate + H(+) = N(tele)-phospho-L-histidyl/L-threonyl-[pyruvate, phosphate dikinase] + diphosphate. In terms of biological role, bifunctional serine/threonine kinase and phosphorylase involved in the regulation of the pyruvate, phosphate dikinase (PPDK) by catalyzing its phosphorylation/dephosphorylation. The chain is Putative pyruvate, phosphate dikinase regulatory protein 2 from Listeria innocua serovar 6a (strain ATCC BAA-680 / CLIP 11262).